Consider the following 271-residue polypeptide: Mannosyl-3-phosphoglycerate phosphatase (271 aa).

Residue Asp13 is the Nucleophile of the active site. Positions 13, 15, and 214 each coordinate Mg(2+).

It belongs to the HAD-like hydrolase superfamily. MPGP family. Mg(2+) is required as a cofactor.

It is found in the cytoplasm. The enzyme catalyses 2-O-(alpha-D-mannosyl)-3-phosphoglycerate + H2O = (2R)-2-O-(alpha-D-mannosyl)-glycerate + phosphate. The protein is Mannosyl-3-phosphoglycerate phosphatase of Escherichia coli (strain 55989 / EAEC).